The sequence spans 374 residues: Calcium/calmodulin-dependent protein kinase type 1 (374 aa).

Positions 20 to 276 constitute a Protein kinase domain; the sequence is YDFRDVLGTG…CEQALQHPWI (257 aa). ATP contacts are provided by residues 26–34 and Lys49; that span reads LGTGAFSEV. Residue Lys59 forms a Glycyl lysine isopeptide (Lys-Gly) (interchain with G-Cter in ubiquitin) linkage. Asp141 serves as the catalytic Proton acceptor. Thr177 carries the post-translational modification Phosphothreonine; by CaMKK1 and CaMKK2. The short motif at 263–264 is the Involved in nuclear import element; sequence KR. Residues 276-316 are autoinhibitory domain; the sequence is IAGDTALDKNIHQSVSEQIKKNFAKSKWKQAFNATAVVRHM. The calmodulin-binding stretch occupies residues 296–317; it reads KNFAKSKWKQAFNATAVVRHMR. A Nuclear export signal motif is present at residues 315 to 321; that stretch reads HMRKLQL.

The protein belongs to the protein kinase superfamily. CAMK Ser/Thr protein kinase family. CaMK subfamily. Monomer. Interacts with XPO1. Post-translationally, phosphorylated by CaMKK1 and CaMKK2 on Thr-177. Polybiquitinated by the E3 ubiquitin-protein ligase complex SCF(FBXL12), leading to proteasomal degradation. In terms of tissue distribution, widely expressed.

It is found in the cytoplasm. The protein localises to the nucleus. The catalysed reaction is L-seryl-[protein] + ATP = O-phospho-L-seryl-[protein] + ADP + H(+). It catalyses the reaction L-threonyl-[protein] + ATP = O-phospho-L-threonyl-[protein] + ADP + H(+). Its activity is regulated as follows. Activated by Ca(2+)/calmodulin. Binding of calmodulin results in conformational change that relieves intrasteric autoinhibition and allows phosphorylation of Thr-177 within the activation loop by CaMKK1 or CaMKK2. Phosphorylation of Thr-177 results in several fold increase in total activity. Unlike CaMK4, is unable to exhibit autonomous activity after Ca(2+)/calmodulin activation. Functionally, calcium/calmodulin-dependent protein kinase that operates in the calcium-triggered CaMKK-CaMK1 signaling cascade and, upon calcium influx, regulates transcription activators activity, cell cycle, hormone production, cell differentiation, actin filament organization and neurite outgrowth. Recognizes the substrate consensus sequence [MVLIF]-x-R-x(2)-[ST]-x(3)-[MVLIF]. Regulates axonal extension and growth cone motility in hippocampal and cerebellar nerve cells. Upon NMDA receptor-mediated Ca(2+) elevation, promotes dendritic growth in hippocampal neurons and is essential in synapses for full long-term potentiation (LTP) and ERK2-dependent translational activation. Downstream of NMDA receptors, promotes the formation of spines and synapses in hippocampal neurons by phosphorylating ARHGEF7/BETAPIX on 'Ser-516', which results in the enhancement of ARHGEF7 activity and activation of RAC1. Promotes neuronal differentiation and neurite outgrowth by activation and phosphorylation of MARK2 on 'Ser-91', 'Ser-92', 'Ser-93' and 'Ser-294'. Promotes nuclear export of HDAC5 and binding to 14-3-3 by phosphorylation of 'Ser-259' and 'Ser-498' in the regulation of muscle cell differentiation. Regulates NUMB-mediated endocytosis by phosphorylation of NUMB on 'Ser-275' and 'Ser-294'. Involved in the regulation of basal and estrogen-stimulated migration of medulloblastoma cells through ARHGEF7/BETAPIX phosphorylation. Is required for proper activation of cyclin-D1/CDK4 complex during G1 progression in diploid fibroblasts. Plays a role in K(+) and ANG2-mediated regulation of the aldosterone synthase (CYP11B2) to produce aldosterone in the adrenal cortex. Phosphorylates EIF4G3/eIF4GII. In vitro phosphorylates CREB1, ATF1, CFTR, MYL9 and SYN1/synapsin I. The protein is Calcium/calmodulin-dependent protein kinase type 1 (Camk1) of Rattus norvegicus (Rat).